The chain runs to 126 residues: Glycine cleavage system H protein (126 aa).

A Lipoyl-binding domain is found at 23–104 (TLTVGITDHA…PYESWLFKIK (82 aa)). N6-lipoyllysine is present on lysine 64.

This sequence belongs to the GcvH family. In terms of assembly, the glycine cleavage system is composed of four proteins: P, T, L and H. (R)-lipoate is required as a cofactor.

Its function is as follows. The glycine cleavage system catalyzes the degradation of glycine. The H protein shuttles the methylamine group of glycine from the P protein to the T protein. This is Glycine cleavage system H protein from Paraburkholderia xenovorans (strain LB400).